A 122-amino-acid polypeptide reads, in one-letter code: Small ribosomal subunit protein uS13 (122 aa).

Positions 93–122 are disordered; it reads RRGLPVRGQRTKTNARTRKGPKKTIAGKKK.

Belongs to the universal ribosomal protein uS13 family. Part of the 30S ribosomal subunit. Forms a loose heterodimer with protein S19. Forms two bridges to the 50S subunit in the 70S ribosome.

Located at the top of the head of the 30S subunit, it contacts several helices of the 16S rRNA. In the 70S ribosome it contacts the 23S rRNA (bridge B1a) and protein L5 of the 50S subunit (bridge B1b), connecting the 2 subunits; these bridges are implicated in subunit movement. Contacts the tRNAs in the A and P-sites. This chain is Small ribosomal subunit protein uS13, found in Corynebacterium urealyticum (strain ATCC 43042 / DSM 7109).